The following is a 482-amino-acid chain: Protein trichome birefringence-like 15 (482 aa).

The helical; Signal-anchor for type II membrane protein transmembrane segment at 109-129 threads the bilayer; the sequence is GSVSLSLIILILLVTTLLVSA. A GDS motif motif is present at residues 217–219; that stretch reads GDS. The DCXHWCLPGXXDXWN motif motif lies at 461–475; sequence DCLHWCLPGIPDTWN.

The protein belongs to the PC-esterase family. TBL subfamily.

Its subcellular location is the membrane. In terms of biological role, may act as a bridging protein that binds pectin and other cell wall polysaccharides. Probably involved in maintaining esterification of pectins. May be involved in the specific O-acetylation of cell wall polymers. The protein is Protein trichome birefringence-like 15 (TBL15) of Arabidopsis thaliana (Mouse-ear cress).